The sequence spans 100 residues: Urease subunit gamma (100 aa).

This sequence belongs to the urease gamma subunit family. In terms of assembly, heterotrimer of UreA (gamma), UreB (beta) and UreC (alpha) subunits. Three heterotrimers associate to form the active enzyme.

It is found in the cytoplasm. The catalysed reaction is urea + 2 H2O + H(+) = hydrogencarbonate + 2 NH4(+). Its pathway is nitrogen metabolism; urea degradation; CO(2) and NH(3) from urea (urease route): step 1/1. In terms of biological role, expression of the urease operon increases the likelihood of bacterial survival by contributing to acid resistance in vitro and in vivo in BALB/c mice. Y.enterocolitica enters the body via an oral path and must survive the acidic stomach before being able to colonize the intestinal mucosa. The polypeptide is Urease subunit gamma (Yersinia enterocolitica).